The primary structure comprises 405 residues: Probable tRNA sulfurtransferase (405 aa).

Residues 60 to 165 form the THUMP domain; that stretch reads QEVSASLKKI…PDAAYISHEE (106 aa). Residues 183-184, 208-209, R265, G287, and Q296 contribute to the ATP site; these read ML and HF.

Belongs to the ThiI family.

Its subcellular location is the cytoplasm. It carries out the reaction [ThiI sulfur-carrier protein]-S-sulfanyl-L-cysteine + a uridine in tRNA + 2 reduced [2Fe-2S]-[ferredoxin] + ATP + H(+) = [ThiI sulfur-carrier protein]-L-cysteine + a 4-thiouridine in tRNA + 2 oxidized [2Fe-2S]-[ferredoxin] + AMP + diphosphate. It catalyses the reaction [ThiS sulfur-carrier protein]-C-terminal Gly-Gly-AMP + S-sulfanyl-L-cysteinyl-[cysteine desulfurase] + AH2 = [ThiS sulfur-carrier protein]-C-terminal-Gly-aminoethanethioate + L-cysteinyl-[cysteine desulfurase] + A + AMP + 2 H(+). The protein operates within cofactor biosynthesis; thiamine diphosphate biosynthesis. In terms of biological role, catalyzes the ATP-dependent transfer of a sulfur to tRNA to produce 4-thiouridine in position 8 of tRNAs, which functions as a near-UV photosensor. Also catalyzes the transfer of sulfur to the sulfur carrier protein ThiS, forming ThiS-thiocarboxylate. This is a step in the synthesis of thiazole, in the thiamine biosynthesis pathway. The sulfur is donated as persulfide by IscS. The sequence is that of Probable tRNA sulfurtransferase from Streptococcus suis (strain 98HAH33).